The chain runs to 160 residues: 6,7-dimethyl-8-ribityllumazine synthase (160 aa).

Residues phenylalanine 23, 61–63, and 85–87 contribute to the 5-amino-6-(D-ribitylamino)uracil site; these read SFE and AVI. A (2S)-2-hydroxy-3-oxobutyl phosphate-binding site is contributed by 90 to 91; it reads DT. The active-site Proton donor is histidine 93. Phenylalanine 118 is a binding site for 5-amino-6-(D-ribitylamino)uracil. Arginine 132 provides a ligand contact to (2S)-2-hydroxy-3-oxobutyl phosphate.

It belongs to the DMRL synthase family.

The catalysed reaction is (2S)-2-hydroxy-3-oxobutyl phosphate + 5-amino-6-(D-ribitylamino)uracil = 6,7-dimethyl-8-(1-D-ribityl)lumazine + phosphate + 2 H2O + H(+). It participates in cofactor biosynthesis; riboflavin biosynthesis; riboflavin from 2-hydroxy-3-oxobutyl phosphate and 5-amino-6-(D-ribitylamino)uracil: step 1/2. Functionally, catalyzes the formation of 6,7-dimethyl-8-ribityllumazine by condensation of 5-amino-6-(D-ribitylamino)uracil with 3,4-dihydroxy-2-butanone 4-phosphate. This is the penultimate step in the biosynthesis of riboflavin. The chain is 6,7-dimethyl-8-ribityllumazine synthase from Parasynechococcus marenigrum (strain WH8102).